Here is a 180-residue protein sequence, read N- to C-terminus: PRA1 family protein F1 (180 aa).

4 helical membrane-spanning segments follow: residues 63 to 83 (ANTV…VFLS), 84 to 104 (LIWN…WLFL), 123 to 143 (IVLI…DAKL), and 145 to 165 (IAVA…VRKT).

It belongs to the PRA1 family. Interacts with PRA1F2. In terms of tissue distribution, expressed in hypocotyls, leaf bases and shoot apex.

Its subcellular location is the endosome membrane. In terms of biological role, may be involved in both secretory and endocytic intracellular trafficking in the endosomal/prevacuolar compartments. This Arabidopsis thaliana (Mouse-ear cress) protein is PRA1 family protein F1 (PRA1F1).